The chain runs to 141 residues: Hemoglobin subunit alpha (141 aa).

One can recognise a Globin domain in the interval 1 to 141; that stretch reads VLSAKDKTNI…VSTVLTSKYR (141 aa). Ser-3 carries the phosphoserine modification. Lys-7 is subject to N6-succinyllysine. A Phosphothreonine modification is found at Thr-8. Lys-16 carries the N6-acetyllysine; alternate modification. Lys-16 carries the post-translational modification N6-succinyllysine; alternate. Residue Tyr-24 is modified to Phosphotyrosine. An N6-succinyllysine modification is found at Lys-40. At Ser-49 the chain carries Phosphoserine. His-58 lines the O2 pocket. Residue His-87 participates in heme b binding. Ser-102 bears the Phosphoserine mark. Thr-108 is subject to Phosphothreonine. Residues Ser-124 and Ser-131 each carry the phosphoserine modification. 2 positions are modified to phosphothreonine: Thr-134 and Thr-137. Ser-138 carries the post-translational modification Phosphoserine.

The protein belongs to the globin family. Heterotetramer of two alpha chains and two beta chains. In terms of tissue distribution, red blood cells.

Involved in oxygen transport from the lung to the various peripheral tissues. Its function is as follows. Hemopressin acts as an antagonist peptide of the cannabinoid receptor CNR1. Hemopressin-binding efficiently blocks cannabinoid receptor CNR1 and subsequent signaling. The protein is Hemoglobin subunit alpha (HBA) of Mesocricetus auratus (Golden hamster).